A 152-amino-acid polypeptide reads, in one-letter code: Peptide deformylase (152 aa).

The Fe cation site is built by Cys91 and His133. The active site involves Glu134. His137 contacts Fe cation.

The protein belongs to the polypeptide deformylase family. Fe(2+) is required as a cofactor.

The catalysed reaction is N-terminal N-formyl-L-methionyl-[peptide] + H2O = N-terminal L-methionyl-[peptide] + formate. Functionally, removes the formyl group from the N-terminal Met of newly synthesized proteins. Requires at least a dipeptide for an efficient rate of reaction. N-terminal L-methionine is a prerequisite for activity but the enzyme has broad specificity at other positions. The chain is Peptide deformylase from Wigglesworthia glossinidia brevipalpis.